We begin with the raw amino-acid sequence, 433 residues long: Pyrimidine-nucleoside phosphorylase (433 aa).

81 to 83 (KHS) provides a ligand contact to phosphate. Positions 88 and 90 each coordinate K(+). Residues Thr92, 108–110 (KMS), and Thr120 contribute to the phosphate site. Residues Arg168 and Lys187 each coordinate substrate. Residues Leu243, Ala246, and Glu255 each contribute to the K(+) site.

This sequence belongs to the thymidine/pyrimidine-nucleoside phosphorylase family. In terms of assembly, homodimer. Requires K(+) as cofactor.

It carries out the reaction uridine + phosphate = alpha-D-ribose 1-phosphate + uracil. It catalyses the reaction thymidine + phosphate = 2-deoxy-alpha-D-ribose 1-phosphate + thymine. The catalysed reaction is 2'-deoxyuridine + phosphate = 2-deoxy-alpha-D-ribose 1-phosphate + uracil. Catalyzes phosphorolysis of the pyrimidine nucleosides uridine, thymidine and 2'-deoxyuridine with the formation of the corresponding pyrimidine base and ribose-1-phosphate. This Bacillus subtilis (strain 168) protein is Pyrimidine-nucleoside phosphorylase.